The following is a 72-amino-acid chain: Translation initiation factor IF-1 (72 aa).

Positions 2–72 (AKEDVIEVEG…TRGRITYRYK (71 aa)) constitute an S1-like domain. Tyr-60 is subject to Phosphotyrosine.

It belongs to the IF-1 family. As to quaternary structure, component of the 30S ribosomal translation pre-initiation complex which assembles on the 30S ribosome in the order IF-2 and IF-3, IF-1 and N-formylmethionyl-tRNA(fMet); mRNA recruitment can occur at any time during PIC assembly.

It is found in the cytoplasm. Functionally, one of the essential components for the initiation of protein synthesis. Stabilizes the binding of IF-2 and IF-3 on the 30S subunit to which N-formylmethionyl-tRNA(fMet) subsequently binds. Helps modulate mRNA selection, yielding the 30S pre-initiation complex (PIC). Upon addition of the 50S ribosomal subunit IF-1, IF-2 and IF-3 are released leaving the mature 70S translation initiation complex. In Halalkalibacterium halodurans (strain ATCC BAA-125 / DSM 18197 / FERM 7344 / JCM 9153 / C-125) (Bacillus halodurans), this protein is Translation initiation factor IF-1.